Consider the following 125-residue polypeptide: MLLSLRKNNEFRTVYRRGKSYANDLLVLYVYPNRKNVTKDGERFNKVGVSVSKKVGKSVVRSRVKRLILENYRLNSSELKEGYDFVFIARVAINGKDFKQVGKAMNNLIKKAGLRDNEKIVHSND.

Belongs to the RnpA family. As to quaternary structure, consists of a catalytic RNA component (M1 or rnpB) and a protein subunit.

The enzyme catalyses Endonucleolytic cleavage of RNA, removing 5'-extranucleotides from tRNA precursor.. Its function is as follows. RNaseP catalyzes the removal of the 5'-leader sequence from pre-tRNA to produce the mature 5'-terminus. It can also cleave other RNA substrates such as 4.5S RNA. The protein component plays an auxiliary but essential role in vivo by binding to the 5'-leader sequence and broadening the substrate specificity of the ribozyme. This Clostridium perfringens (strain ATCC 13124 / DSM 756 / JCM 1290 / NCIMB 6125 / NCTC 8237 / Type A) protein is Ribonuclease P protein component.